Consider the following 853-residue polypeptide: MEYNFTTIEKKWQKFWKDNQSFKTVSKPTDKKYYVLEMFPYPSGKMHMGHVSNYTIADSIARYYKLLGYDILHPMGWDAFGMPAENAAIEHKTHPAEWTLKNIANMKDQLNLLGYSYDWDREVTTCLPDYYKWGQWFILKMYEKGLLYRKGGDVNWCDHCNTVLANEQVTPEGTCWRCDGEVTKKKLEQWYIKVTDYAEQLDADLKLLEGYWPDNVIAMQKNWIGRSVGAYINFNLDDGKAFPIFTTRPDTIYGVTYMAIAWNYDGLLDMCTTEQKSAVEEFIKKSAKIDQKTDYEKEGVFTGRYVVNPFNGEKAPLYAANFVLAEYGSGAVMAVPAHDQRDFEFAKKYNIPVKVVIQNADNSLKAENMTEAYTEDGTVVNSDILNGLSSRDAIKRAIEYATEKGFGKEKVQYKLRDWLISRQRYWGNPLPFVHCEKCGVVPVPESELPITLPMDIEFTVGDNPLKKSESFVNTTCPKCGGKARRETDTMDTFTCSSWYYARYTDAHNNQMPFDPSAANAWLGVDQYIGGIEHACMHLLYSRFWYKFMRDIGLVKGDEPFNRLLTQGMVLANSYESRELKKFYTQEQMNNKEYEKDGIKKEDIIVKMEKMSKSKANGIDPAEIIELFGADAVRIFVMFVAPPEKDKEWSDEGVKGSSRFLNRIWNLFLKYKDEEAFKNGKSFDYNNLSKEGQKLFRKYNKTIKKVTIDIKDRFHFNTAIAALMELLNDMSVIKLANNDDYAMFKEVIRGYLILLNPIAPHMTEELYQILNFGKMILEERWVEHDEQYCKDDTFELVFQVNGKIRDRVEADVNISEDDAKAQALASEKVKAFTDGKNIVKVVYVKGKLVNIVVK.

The 'HIGH' region motif lies at 40–50 (PYPSGKMHMGH). The 'KMSKS' region signature appears at 609–613 (KMSKS). K612 serves as a coordination point for ATP.

It belongs to the class-I aminoacyl-tRNA synthetase family.

It localises to the cytoplasm. The catalysed reaction is tRNA(Leu) + L-leucine + ATP = L-leucyl-tRNA(Leu) + AMP + diphosphate. This is Leucine--tRNA ligase from Brachyspira hyodysenteriae (strain ATCC 49526 / WA1).